We begin with the raw amino-acid sequence, 345 residues long: Trace amine-associated receptor 6 (345 aa).

Topologically, residues 1 to 32 (MSSNSSLLVAVQLCYPNVNGSCVETLYSPGSR) are extracellular. N-linked (GlcNAc...) asparagine glycosylation is found at N4 and N19. 2 disulfides stabilise this stretch: C22–C186 and C105–C190. Residues 33-53 (VILYIVFGFGAVLAVFGNLLV) form a helical membrane-spanning segment. Topologically, residues 54 to 68 (MISILHFKQLHSPTN) are cytoplasmic. A helical transmembrane segment spans residues 69–89 (FLVASLACADFLVGVTVMPFS). At 90–107 (MVRTVESCWYFGRSFCTF) the chain is on the extracellular side. Residues 108-128 (HTCCDVAFCYSSLFHLCFISI) form a helical membrane-spanning segment. At 129 to 147 (DRYIAVTDPLVYPTKFTVS) the chain is on the cytoplasmic side. Residues 148–168 (VSGICISVSWILPLMYSGAVF) form a helical membrane-spanning segment. Residues 169–202 (YTGVYDDGLEELSDALNCIGGCQTVVNQNWVLID) lie on the Extracellular side of the membrane. The chain crosses the membrane as a helical span at residues 203–223 (CLSFFIPTFIMIILYGNIFLV). The Cytoplasmic segment spans residues 224–259 (ARRQAKKIENTGSKTESSSESYKARVARRERKAAKT). A helical membrane pass occupies residues 260–276 (LGVTVVAFMISWLPYSI). The Extracellular segment spans residues 277–282 (DSLIDA). The chain crosses the membrane as a helical span at residues 283 to 302 (FMGFITPAYIYEICCWCAYY). At 303 to 345 (NSAMNPLIYALFYPWFRKAIKVIVTGQVLKNSSATMNLFSEHI) the chain is on the cytoplasmic side.

Belongs to the G-protein coupled receptor 1 family.

The protein localises to the cell membrane. Olfactory receptor specific for trace amines, such as beta-phenylethylamine (beta-PEA). Trace amine compounds are enriched in animal body fluids and act on trace amine-associated receptors (TAARs) to elicit both intraspecific and interspecific innate behaviors. Beta-PEA-binding causes a conformation change that triggers signaling via G(s)-class of G alpha proteins (GNAL or GNAS). This is Trace amine-associated receptor 6 (TAAR6) from Pan troglodytes (Chimpanzee).